The primary structure comprises 40 residues: Large ribosomal subunit protein bL36 (40 aa).

The protein belongs to the bacterial ribosomal protein bL36 family.

This Corynebacterium glutamicum (strain R) protein is Large ribosomal subunit protein bL36.